A 298-amino-acid polypeptide reads, in one-letter code: Cyclin-dependent kinase 2 (298 aa).

In terms of domain architecture, Protein kinase spans 4 to 286 (FQKVEKIGEG…AKNALVHRFF (283 aa)). ATP-binding positions include 10 to 18 (IGEGTYGVV), Lys33, 81 to 83 (EFL), and Asp86. Thr14 bears the Phosphothreonine mark. Tyr15 bears the Phosphotyrosine mark. Asp127 acts as the Proton acceptor in catalysis. Residues 129–132 (KPQN) and Asp145 each bind ATP. Thr160 carries the post-translational modification Phosphothreonine; by CAK.

Belongs to the protein kinase superfamily. CMGC Ser/Thr protein kinase family. CDC2/CDKX subfamily.

It carries out the reaction L-seryl-[protein] + ATP = O-phospho-L-seryl-[protein] + ADP + H(+). The enzyme catalyses L-threonyl-[protein] + ATP = O-phospho-L-threonyl-[protein] + ADP + H(+). Phosphorylation at Thr-14 or Tyr-15 inactivates the enzyme, while phosphorylation at Thr-160 activates it. Functionally, serine/threonine-protein kinase involved in the control of the cell cycle; essential for meiosis, but dispensable for mitosis. Triggers duplication of centrosomes and DNA. Acts at the G1-S transition to promote the E2F transcriptional program and the initiation of DNA synthesis, and modulates G2 progression; controls the timing of entry into mitosis/meiosis by controlling the subsequent activation of cyclin B/CDK1 by phosphorylation, and coordinates the activation of cyclin B/CDK1 at the centrosome and in the nucleus. Crucial role in orchestrating a fine balance between cellular proliferation, cell death, and DNA repair in embryonic stem cells (ESCs). Activity of CDK2 is maximal during S phase and G2; activated by interaction with cyclin E during the early stages of DNA synthesis to permit G1-S transition, and subsequently activated by cyclin A2 (cyclin A1 in germ cells) during the late stages of DNA replication to drive the transition from S phase to mitosis, the G2 phase. This is Cyclin-dependent kinase 2 (cdk2) from Carassius auratus (Goldfish).